The sequence spans 144 residues: D-aminoacyl-tRNA deacylase (144 aa).

The Gly-cisPro motif, important for rejection of L-amino acids signature appears at 136–137 (GP).

Belongs to the DTD family. In terms of assembly, homodimer.

It localises to the cytoplasm. It catalyses the reaction glycyl-tRNA(Ala) + H2O = tRNA(Ala) + glycine + H(+). The enzyme catalyses a D-aminoacyl-tRNA + H2O = a tRNA + a D-alpha-amino acid + H(+). Its function is as follows. An aminoacyl-tRNA editing enzyme that deacylates mischarged D-aminoacyl-tRNAs. Also deacylates mischarged glycyl-tRNA(Ala), protecting cells against glycine mischarging by AlaRS. Acts via tRNA-based rather than protein-based catalysis; rejects L-amino acids rather than detecting D-amino acids in the active site. By recycling D-aminoacyl-tRNA to D-amino acids and free tRNA molecules, this enzyme counteracts the toxicity associated with the formation of D-aminoacyl-tRNA entities in vivo and helps enforce protein L-homochirality. This chain is D-aminoacyl-tRNA deacylase, found in Aliivibrio fischeri (strain MJ11) (Vibrio fischeri).